Here is a 429-residue protein sequence, read N- to C-terminus: UDP-N-acetylglucosamine 1-carboxyvinyltransferase (429 aa).

22–23 (KN) is a phosphoenolpyruvate binding site. Arginine 102 contacts UDP-N-acetyl-alpha-D-glucosamine. Cysteine 126 acts as the Proton donor in catalysis. Cysteine 126 is subject to 2-(S-cysteinyl)pyruvic acid O-phosphothioketal. UDP-N-acetyl-alpha-D-glucosamine-binding positions include 131 to 135 (RPVDL), aspartate 316, and isoleucine 338.

The protein belongs to the EPSP synthase family. MurA subfamily.

It is found in the cytoplasm. It carries out the reaction phosphoenolpyruvate + UDP-N-acetyl-alpha-D-glucosamine = UDP-N-acetyl-3-O-(1-carboxyvinyl)-alpha-D-glucosamine + phosphate. Its pathway is cell wall biogenesis; peptidoglycan biosynthesis. In terms of biological role, cell wall formation. Adds enolpyruvyl to UDP-N-acetylglucosamine. The chain is UDP-N-acetylglucosamine 1-carboxyvinyltransferase from Methylobacterium radiotolerans (strain ATCC 27329 / DSM 1819 / JCM 2831 / NBRC 15690 / NCIMB 10815 / 0-1).